The following is a 585-amino-acid chain: MDEEENSEINSVQARDEDVQLEDQQSQGLQDRQVDVIEQAWNNAMPDEPSPPAEDAFQDPLATDGEGGDALEAMVENVLQDDTASEGSHPSSDMSLESPGSEDDSDLESLPHWMIPQNRLRSAVDMMVSQARNRDGGIAALLSGDNFLQRVRSMVFSQERRRSRTSEETSQEAAEQPVDPPPQQPPRPPIDIGFDTNLPAEHSYFGNHLSRVPGVDYLEVGSVHHMLIFLHQHILFPGEVLPFMIDGRMFDEDMPGLDGLIFGVSFPRLQPPEDNPHKLYGVTCQIYERGESGRGLVFYKSRALQRIVINCDDIKGSPQYIARNPTSKCFSKVKILPEYFLPEPLQTVDMGSMARFRDIPSMRDKYRRFQLSTTTWPSDACQEYSFSSIVERARQRLESQKIDTMPKCPIQLSFWLVRNLHLTEKMMRLTFLTDSVNTRLQLIKSTFKDETLFFCRYCNSSLALCSDLFAMSKHGVQTQYCNPEGYIHETNTVYRVISHAIGYSGEPSTKFSWFPGYQWHIILCKFCAQHVGWEFKAVHPNLTPKVFFGLAGSSVRIGKASEYSPFNGTTYVVRNMMRMISSDME.

Disordered regions lie at residues 1-109 (MDEE…DLES) and 156-195 (FSQE…IGFD). Positions 80-95 (QDDTASEGSHPSSDMS) are enriched in polar residues. The segment covering 158 to 167 (QERRRSRTSE) has biased composition (basic and acidic residues). Pro residues predominate over residues 178–189 (VDPPPQQPPRPP). Residues 225 to 451 (HMLIFLHQHI…LIKSTFKDET (227 aa)) enclose the Lon N-terminal domain. The CULT domain maps to 450-559 (ETLFFCRYCN…LAGSSVRIGK (110 aa)). Residues Cys455, Cys458, Cys524, and Cys527 each contribute to the Zn(2+) site.

It belongs to the CRBN family. In terms of assembly, likely a component of a DCX (DDB1-CUL4-X-box) protein ligase complex. May interact with pic/DDB1. Ubiquitinated. Expressed in the fat body (at protein level).

Its subcellular location is the nucleus. It participates in protein modification; protein ubiquitination. Functionally, substrate recognition component of a DCX (DDB1-CUL4-X-box) E3 protein ligase complex that mediates the ubiquitination and subsequent proteasomal degradation of target proteins. Has an essential role in mediating growth by negatively regulating insulin signaling. It also has a role in maintaining presynaptic function in the neuromuscular junction synapses of third-instar larvae. The polypeptide is Protein cereblon (Drosophila melanogaster (Fruit fly)).